The primary structure comprises 290 residues: Dehydrodolichyl diphosphate synthase CPT3 (290 aa).

Aspartate 42 is an active-site residue.

Belongs to the UPP synthase family. The cofactor is Mg(2+). As to expression, expressed in leaf trichomes and stem trichomes. Expressed at low levels in young leaves, stems and old leaves.

It is found in the cytoplasm. Its subcellular location is the cytosol. It catalyses the reaction n isopentenyl diphosphate + (2E,6E)-farnesyl diphosphate = a di-trans,poly-cis-polyprenyl diphosphate + n diphosphate. Catalyzes cis-prenyl chain elongation to produce the polyprenyl backbone of dolichol, a glycosyl carrier-lipid required for the biosynthesis of several classes of glycoprotein. This is Dehydrodolichyl diphosphate synthase CPT3 from Solanum lycopersicum (Tomato).